The primary structure comprises 407 residues: Putative F-box protein At5g60560 (407 aa).

In terms of domain architecture, F-box spans threonine 2–lysine 49.

In Arabidopsis thaliana (Mouse-ear cress), this protein is Putative F-box protein At5g60560.